The sequence spans 932 residues: Receptor-like protein 9a (932 aa).

The signal sequence occupies residues 1-28; it reads MLIFTIPQFFFAAWVMVVSLQMQGYISC. Residues 29–888 are Extracellular-facing; the sequence is IEKERKGLLE…DDETAIDMET (860 aa). N-linked (GlcNAc...) asparagine glycosylation is found at Asn53, Asn80, and Asn90. 28 LRR repeats span residues 97–122, 126–152, 154–174, 175–200, 202–222, 223–246, 247–273, 275–295, 296–320, 322–345, 346–368, 370–393, 394–417, 418–441, 443–466, 468–491, 492–514, 516–535, 536–560, 561–583, 585–605, 606–629, 631–652, 653–676, 745–769, 770–792, 794–817, and 819–842; these read FEEL…GYKS, LKKL…AASS, RTLI…ELKD, LSNL…VLHK, HALD…GLCQ, LKNL…CFSS, LTQL…NLDS, EYLS…LIAN, LSKL…ISLQ, KFRL…LQQQ, KDLR…WFLE, YPKL…RLLV, HSLH…IGHV, LPNI…SFSE, KKIF…FCIG, SSLS…PMKL, ESLR…LIHS, GLVF…PSWF, GGFY…TLFN, VSFQ…HFSF, HMGL…STLL, ENVM…VSNR, FLYL…LCEL, KSIR…LNNV, FKFM…LGDF, QRIR…SFSN, TDIE…LTKL, and YIVV…KFLS. N-linked (GlcNAc...) asparagine glycosylation is present at Asn140. 2 N-linked (GlcNAc...) asparagine glycosylation sites follow: Asn261 and Asn295. 2 N-linked (GlcNAc...) asparagine glycosylation sites follow: Asn352 and Asn380. N-linked (GlcNAc...) asparagine glycosylation is found at Asn420, Asn425, and Asn454. N-linked (GlcNAc...) asparagine glycosylation is found at Asn524, Asn551, and Asn560. Asn666 and Asn675 each carry an N-linked (GlcNAc...) asparagine glycan. Asn776 and Asn792 each carry an N-linked (GlcNAc...) asparagine glycan. N-linked (GlcNAc...) asparagine glycans are attached at residues Asn824, Asn829, Asn860, and Asn866. A helical membrane pass occupies residues 889–909; sequence FYWSLFATYGITWMAFIVFLC. At 910-932 the chain is on the cytoplasmic side; the sequence is FDSPWRQAWFRLVNVFVSFLKCV.

It belongs to the RLP family.

It is found in the cell membrane. The polypeptide is Receptor-like protein 9a (Arabidopsis thaliana (Mouse-ear cress)).